The primary structure comprises 123 residues: Ribulose bisphosphate carboxylase small subunit, chloroplastic 1 (123 aa).

Met-1 carries the methionine derivative modification.

It belongs to the RuBisCO small chain family. As to quaternary structure, heterohexadecamer of 8 large and 8 small subunits.

The protein resides in the plastid. The protein localises to the chloroplast. In terms of biological role, ruBisCO catalyzes two reactions: the carboxylation of D-ribulose 1,5-bisphosphate, the primary event in carbon dioxide fixation, as well as the oxidative fragmentation of the pentose substrate. Both reactions occur simultaneously and in competition at the same active site. Although the small subunit is not catalytic it is essential for maximal activity. This Spinacia oleracea (Spinach) protein is Ribulose bisphosphate carboxylase small subunit, chloroplastic 1.